The primary structure comprises 995 residues: Autophagy-related protein 9 (995 aa).

Polar residues predominate over residues Met-1–Ser-11. A disordered region spans residues Met-1–Leu-208. At Met-1–Arg-255 the chain is on the cytoplasmic side. Positions Arg-69–Pro-91 are enriched in low complexity. 2 stretches are compositionally biased toward polar residues: residues Gly-92–Thr-106 and Thr-137–Pro-147. A compositionally biased stretch (basic residues) spans Glu-179–Ser-191. A helical membrane pass occupies residues Val-256 to Ile-276. At Asp-277–Thr-311 the chain is on the lumenal side. A helical transmembrane segment spans residues Leu-312–Val-332. The Cytoplasmic portion of the chain corresponds to Pro-333 to Arg-516. Residues Phe-517 to Ile-537 lie within the membrane without spanning it. Over Tyr-538–Arg-605 the chain is Cytoplasmic. A helical transmembrane segment spans residues Phe-606–Pro-626. At Asp-627–Arg-638 the chain is on the lumenal side. A helical transmembrane segment spans residues Thr-639–Pro-659. The Cytoplasmic segment spans residues Gln-660–Lys-705. An intramembrane segment occupies Ile-706–Ser-726. Over Leu-727–Arg-995 the chain is Cytoplasmic. 2 disordered regions span residues Glu-771 to Gly-817 and Trp-914 to Arg-978. The segment covering Gly-783–Ser-808 has biased composition (low complexity). Residues Glu-949–Gly-968 are compositionally biased toward basic and acidic residues.

It belongs to the ATG9 family. As to quaternary structure, homotrimer; forms a homotrimer with a central pore that forms a path between the two membrane leaflets. Post-translationally, phosphorylated by ATG1. ATG1 phosphorylation is required for preautophagosome elongation.

Its subcellular location is the preautophagosomal structure membrane. The protein localises to the cytoplasmic vesicle membrane. It localises to the golgi apparatus membrane. The protein resides in the endoplasmic reticulum membrane. The catalysed reaction is a 1,2-diacyl-sn-glycero-3-phosphocholine(in) = a 1,2-diacyl-sn-glycero-3-phosphocholine(out). It catalyses the reaction a 1,2-diacyl-sn-glycero-3-phospho-L-serine(in) = a 1,2-diacyl-sn-glycero-3-phospho-L-serine(out). The enzyme catalyses a 1,2-diacyl-sn-glycero-3-phosphoethanolamine(in) = a 1,2-diacyl-sn-glycero-3-phosphoethanolamine(out). It carries out the reaction a 1,2-diacyl-sn-glycero-3-phospho-(1D-myo-inositol-3-phosphate)(in) = a 1,2-diacyl-sn-glycero-3-phospho-(1D-myo-inositol-3-phosphate)(out). Functionally, phospholipid scramblase involved in autophagy and cytoplasm to vacuole transport (Cvt) vesicle formation. Cycles between the preautophagosomal structure/phagophore assembly site (PAS) and the cytoplasmic vesicle pool and supplies membrane for the growing autophagosome. Lipid scramblase activity plays a key role in preautophagosomal structure/phagophore assembly by distributing the phospholipids that arrive through ATG2 from the cytoplasmic to the luminal leaflet of the bilayer, thereby driving autophagosomal membrane expansion. Required for mitophagy. Also involved in endoplasmic reticulum-specific autophagic process and is essential for the survival of cells subjected to severe ER stress. Different machineries are required for anterograde trafficking to the PAS during either the Cvt pathway or bulk autophagy and for retrograde trafficking. In Cryptococcus neoformans var. neoformans serotype D (strain JEC21 / ATCC MYA-565) (Filobasidiella neoformans), this protein is Autophagy-related protein 9 (ATG9).